Reading from the N-terminus, the 649-residue chain is tRNA-guanine(15) transglycosylase (649 aa).

Residue Asp-88 is the Nucleophile of the active site. Substrate-binding residues include Asp-123 and Ala-194. Zn(2+)-binding residues include Cys-280, Cys-282, and Cys-285. Residues 573 to 648 (KYRIVIDSSV…VAVTLRGGLK (76 aa)) enclose the PUA domain.

Belongs to the archaeosine tRNA-ribosyltransferase family. Zn(2+) serves as cofactor.

The enzyme catalyses guanosine(15) in tRNA + 7-cyano-7-deazaguanine = 7-cyano-7-carbaguanosine(15) in tRNA + guanine. The protein operates within tRNA modification; archaeosine-tRNA biosynthesis. Exchanges the guanine residue with 7-cyano-7-deazaguanine (preQ0) at position 15 in the dihydrouridine loop (D-loop) of archaeal tRNAs. In Methanococcus maripaludis (strain C7 / ATCC BAA-1331), this protein is tRNA-guanine(15) transglycosylase.